A 163-amino-acid chain; its full sequence is Photosystem II extrinsic protein V (163 aa).

The N-terminal stretch at 1 to 26 (MLKRSSWLAALLGLLTVVSTSTHTYA) is a signal peptide. Positions 63, 66, 67, and 118 each coordinate heme c.

This sequence belongs to the cytochrome c family. PsbV subfamily. PSII is composed of 1 copy each of membrane proteins PsbA, PsbB, PsbC, PsbD, PsbE, PsbF, PsbH, PsbI, PsbJ, PsbK, PsbL, PsbM, PsbT, PsbY, PsbZ, Psb30/Ycf12, at least 3 peripheral proteins of the oxygen-evolving complex and a large number of cofactors. It forms dimeric complexes. The extrinsic subunits in red algae are PsbO (OEC33), PsbQ', cytochrome c-550 and PsbU. The cofactor is heme c.

It is found in the plastid. The protein localises to the chloroplast thylakoid membrane. In terms of biological role, one of the extrinsic, lumenal subunits of photosystem II (PSII). PSII is a light-driven water plastoquinone oxidoreductase, using light energy to abstract electrons from H(2)O, generating a proton gradient subsequently used for ATP formation. The extrinsic proteins stabilize the structure of photosystem II oxygen-evolving complex (OEC), the ion environment of oxygen evolution and protect the OEC against heat-induced inactivation. The polypeptide is Photosystem II extrinsic protein V (Pyropia yezoensis (Susabi-nori)).